The following is a 102-amino-acid chain: Large ribosomal subunit protein bL21 (102 aa).

It belongs to the bacterial ribosomal protein bL21 family. Part of the 50S ribosomal subunit. Contacts protein L20.

Its function is as follows. This protein binds to 23S rRNA in the presence of protein L20. This is Large ribosomal subunit protein bL21 from Enterococcus faecalis (strain ATCC 700802 / V583).